A 460-amino-acid chain; its full sequence is Phosphoglucomutase (460 aa).

Ser-103 functions as the Phosphoserine intermediate in the catalytic mechanism. Ser-103 is a Mg(2+) binding site. Residues 103-104 and Lys-113 each bind substrate; that span reads SH. Residues Asp-239, Asp-241, and Asp-243 each coordinate Mg(2+). Substrate contacts are provided by residues 243 to 244, Thr-303, and 322 to 324; these read DR and EMS.

Belongs to the phosphohexose mutase family. It depends on Mg(2+) as a cofactor.

The protein localises to the cytoplasm. It catalyses the reaction alpha-D-glucose 1-phosphate = alpha-D-glucose 6-phosphate. Its function is as follows. This enzyme participates in both the breakdown and synthesis of glucose. The protein is Phosphoglucomutase (pgm) of Neisseria gonorrhoeae.